The chain runs to 309 residues: 2-phospho-L-lactate transferase (309 aa).

7,8-didemethyl-8-hydroxy-5-deazariboflavin-binding residues include aspartate 48 and lysine 87.

Belongs to the CofD family. In terms of assembly, homodimer. Mg(2+) serves as cofactor.

The catalysed reaction is (2S)-lactyl-2-diphospho-5'-guanosine + 7,8-didemethyl-8-hydroxy-5-deazariboflavin = oxidized coenzyme F420-0 + GMP + H(+). It functions in the pathway cofactor biosynthesis; coenzyme F420 biosynthesis. Its function is as follows. Catalyzes the transfer of the 2-phospholactate moiety from (2S)-lactyl-2-diphospho-5'-guanosine to 7,8-didemethyl-8-hydroxy-5-deazariboflavin (FO) with the formation of oxidized coenzyme F420-0 and GMP. This is 2-phospho-L-lactate transferase from Methanosarcina barkeri (strain Fusaro / DSM 804).